We begin with the raw amino-acid sequence, 299 residues long: Probable lipid kinase YegS (299 aa).

The DAGKc domain maps to 2-133; the sequence is ANFPASLLIL…IDMARVNDKT (132 aa). Residues Thr-40, 66 to 72, and Thr-95 each bind ATP; that span reads GDGTINE. Mg(2+)-binding residues include Leu-215, Asp-218, and Leu-220. Residue Glu-271 is the Proton acceptor of the active site.

Belongs to the diacylglycerol/lipid kinase family. YegS lipid kinase subfamily. It depends on Mg(2+) as a cofactor. Requires Ca(2+) as cofactor.

The protein resides in the cytoplasm. Probably phosphorylates lipids; the in vivo substrate is unknown. This Salmonella paratyphi A (strain ATCC 9150 / SARB42) protein is Probable lipid kinase YegS.